The following is a 549-amino-acid chain: Movement protein Hsp70h (549 aa).

It belongs to the heat shock protein 70 family.

The protein localises to the virion. Its function is as follows. Transports viral genome to neighboring plant cells directly through plasmosdesmata, without any budding. The movement protein allows efficient cell to cell propagation, by bypassing the host cell wall barrier. Two movement proteins, p6, Hsp70h and three structural proteins, CP, CPm, and P64 are essential for cell-cell movement. Also plays a role in virion formation. Together with CPm and p64, encapsidates the 5'-terminal portion of the viral genome. The protein is Movement protein Hsp70h of Vitis vinifera (Grape).